A 263-amino-acid chain; its full sequence is Pimeloyl-[acyl-carrier protein] methyl ester esterase (263 aa).

Residues Trp28, 86-87 (SL), and 149-153 (FLAIQ) contribute to the substrate site. Residue Ser86 is the Nucleophile of the active site. Active-site residues include Asp213 and His240. Residue His240 coordinates substrate.

It belongs to the AB hydrolase superfamily. Carboxylesterase BioH family. Monomer.

It is found in the cytoplasm. The catalysed reaction is 6-carboxyhexanoyl-[ACP] methyl ester + H2O = 6-carboxyhexanoyl-[ACP] + methanol + H(+). The protein operates within cofactor biosynthesis; biotin biosynthesis. The physiological role of BioH is to remove the methyl group introduced by BioC when the pimeloyl moiety is complete. It allows to synthesize pimeloyl-ACP via the fatty acid synthetic pathway through the hydrolysis of the ester bonds of pimeloyl-ACP esters. The protein is Pimeloyl-[acyl-carrier protein] methyl ester esterase of Shewanella oneidensis (strain ATCC 700550 / JCM 31522 / CIP 106686 / LMG 19005 / NCIMB 14063 / MR-1).